Here is a 575-residue protein sequence, read N- to C-terminus: Dihydroxy-acid dehydratase (575 aa).

Positions 1–27 (MSNQERQERPEKDPDLRSTEVTEGYEK) are disordered. Cys-61 is a binding site for [2Fe-2S] cluster. Asp-93 serves as a coordination point for Mg(2+). Cys-134 contributes to the [2Fe-2S] cluster binding site. Residues Asp-135 and Lys-136 each contribute to the Mg(2+) site. Lys-136 is modified (N6-carboxylysine). Cys-206 provides a ligand contact to [2Fe-2S] cluster. Glu-460 is a Mg(2+) binding site. Ser-486 serves as the catalytic Proton acceptor.

Belongs to the IlvD/Edd family. Homodimer. Requires [2Fe-2S] cluster as cofactor. Mg(2+) is required as a cofactor.

The catalysed reaction is (2R)-2,3-dihydroxy-3-methylbutanoate = 3-methyl-2-oxobutanoate + H2O. It carries out the reaction (2R,3R)-2,3-dihydroxy-3-methylpentanoate = (S)-3-methyl-2-oxopentanoate + H2O. It functions in the pathway amino-acid biosynthesis; L-isoleucine biosynthesis; L-isoleucine from 2-oxobutanoate: step 3/4. It participates in amino-acid biosynthesis; L-valine biosynthesis; L-valine from pyruvate: step 3/4. In terms of biological role, functions in the biosynthesis of branched-chain amino acids. Catalyzes the dehydration of (2R,3R)-2,3-dihydroxy-3-methylpentanoate (2,3-dihydroxy-3-methylvalerate) into 2-oxo-3-methylpentanoate (2-oxo-3-methylvalerate) and of (2R)-2,3-dihydroxy-3-methylbutanoate (2,3-dihydroxyisovalerate) into 2-oxo-3-methylbutanoate (2-oxoisovalerate), the penultimate precursor to L-isoleucine and L-valine, respectively. The sequence is that of Dihydroxy-acid dehydratase from Haloarcula marismortui (strain ATCC 43049 / DSM 3752 / JCM 8966 / VKM B-1809) (Halobacterium marismortui).